The chain runs to 489 residues: Glutamate--tRNA ligase (489 aa).

A 'HIGH' region motif is present at residues 10–20 (PSPTGFLHIGG). A 'KMSKS' region motif is present at residues 261 to 265 (KLSKR). Lys-264 provides a ligand contact to ATP.

It belongs to the class-I aminoacyl-tRNA synthetase family. Glutamate--tRNA ligase type 1 subfamily. As to quaternary structure, monomer.

The protein resides in the cytoplasm. The enzyme catalyses tRNA(Glu) + L-glutamate + ATP = L-glutamyl-tRNA(Glu) + AMP + diphosphate. In terms of biological role, catalyzes the attachment of glutamate to tRNA(Glu) in a two-step reaction: glutamate is first activated by ATP to form Glu-AMP and then transferred to the acceptor end of tRNA(Glu). The polypeptide is Glutamate--tRNA ligase (Finegoldia magna (strain ATCC 29328 / DSM 20472 / WAL 2508) (Peptostreptococcus magnus)).